The following is a 681-amino-acid chain: Envelope glycoprotein (681 aa).

Residues 1–18 form the signal peptide; sequence MKTTCLLISLILIQGVKT. Over 19-648 the chain is Extracellular; it reads LPILEIASNI…GLGGKWWTSD (630 aa). The receptor-binding stretch occupies residues 38-188; that stretch reads SGTLQKTEDV…FSRQGQGYRH (151 aa). Asparagine 94, asparagine 171, asparagine 190, asparagine 202, asparagine 207, asparagine 219, asparagine 223, and asparagine 255 each carry an N-linked (GlcNAc...) asparagine; by host glycan. The interval 222-424 is disordered; the sequence is KNQTCAPSKK…TSPSPTPNST (203 aa). 3 stretches are compositionally biased toward polar residues: residues 244–259, 278–290, and 308–331; these read LTSTSTDATKLNTTDP, PYTTSDAATKQGL, and GGNNTNHSQGVVTEPGKTNTTAQP. The mucin-like region stretch occupies residues 277-455; that stretch reads EPYTTSDAAT…PFLDGLINAP (179 aa). N-linked (GlcNAc...) asparagine; by host glycans are attached at residues asparagine 310, asparagine 313, asparagine 326, asparagine 337, asparagine 344, asparagine 345, asparagine 350, asparagine 360, asparagine 397, asparagine 408, asparagine 422, and asparagine 487. Residues 337–347 are compositionally biased toward low complexity; sequence NTTTISTNNTS. A compositionally biased stretch (polar residues) spans 348–388; sequence KHNLSTPSVPIQNATNYNTQSTAPENEQTSAPSKTTLLPTE. Residues 389–424 show a composition bias toward low complexity; it reads NPTTAKSTNSTKSPTTTVPNTTNKYSTSPSPTPNST. The segment at 529-549 is fusion peptide; sequence GLSWIPFFGPGIEGLYTAGLI. N-linked (GlcNAc...) asparagine; by host glycosylation is found at asparagine 564 and asparagine 619. Residues 649–669 form a helical membrane-spanning segment; it reads WGVLTNLGILLLLSIAVLIAL. The Cytoplasmic segment spans residues 670-681; it reads SCICRIFTKYIG. Residues cysteine 671 and cysteine 673 are each lipidated (S-palmitoyl cysteine; by host).

Belongs to the filoviruses glycoprotein family. In terms of assembly, homotrimer; each monomer consists of a GP1 and a GP2 subunit linked by disulfide bonds. The resulting peplomers (GP1,2) protrude from the virus surface as spikes. GP1,2 interacts with human CD209 and CLEC4M (collectively referred to as DC-SIGN(R)). Asialoglycoprotein receptor (ASGP-R) may be a liver-specific receptor for GP1,2. Members of the Tyro3 receptor tyrosine kinase family may be cell entry factors interacting with GP1,2. Post-translationally, N-glycosylated. O-glycosylated in the mucin-like region. In terms of processing, specific enzymatic cleavages in vivo yield mature proteins. The precursor is processed into GP1 and GP2 by host cell furin in the trans Golgi, and maybe by other host proteases, to yield the mature GP1 and GP2 proteins. The cleavage site corresponds to the furin optimal cleavage sequence [KR]-X-[KR]-R. Post-translationally, GP1 is phosphorylated on serine residues between residues 260 and 273.

The protein localises to the virion membrane. It localises to the host cell membrane. GP1 is responsible for binding to the receptor(s) on target cells. Interacts with CD209/DC-SIGN and CLEC4M/DC-SIGNR which act as cofactors for virus entry into the host cell. Binding to CD209 and CLEC4M, which are respectively found on dendritic cells (DCs), and on endothelial cells of liver sinusoids and lymph node sinuses, facilitate infection of macrophages and endothelial cells. These interactions not only facilitate virus cell entry, but also allow capture of viral particles by DCs and subsequent transmission to susceptible cells without DCs infection (trans infection). Its function is as follows. GP2 acts as a class I viral fusion protein. Under the current model, the protein has at least 3 conformational states: pre-fusion native state, pre-hairpin intermediate state, and post-fusion hairpin state. During viral and target cell membrane fusion, the coiled coil regions (heptad repeats) assume a trimer-of-hairpins structure, positioning the fusion peptide in close proximity to the C-terminal region of the ectodomain. The formation of this structure appears to drive apposition and subsequent fusion of viral and target cell membranes. Responsible for penetration of the virus into the cell cytoplasm by mediating the fusion of the membrane of the endocytosed virus particle with the endosomal membrane. Low pH in endosomes induces an irreversible conformational change in GP2, releasing the fusion hydrophobic peptide. The polypeptide is Envelope glycoprotein (GP) (Chlorocebus aethiops (Green monkey)).